Consider the following 216-residue polypeptide: Uracil phosphoribosyltransferase (216 aa).

Residue 30-34 coordinates GTP; it reads KNLVK. 5-phospho-alpha-D-ribose 1-diphosphate-binding positions include Arg-80, Arg-105, and 140–148; that span reads DPMIATGST. Uracil is bound by residues Ile-203 and 208 to 210; that span reads GDA. Residue Asp-209 coordinates 5-phospho-alpha-D-ribose 1-diphosphate.

Belongs to the UPRTase family. Requires Mg(2+) as cofactor.

It carries out the reaction UMP + diphosphate = 5-phospho-alpha-D-ribose 1-diphosphate + uracil. The protein operates within pyrimidine metabolism; UMP biosynthesis via salvage pathway; UMP from uracil: step 1/1. Its activity is regulated as follows. Allosterically activated by GTP. In terms of biological role, catalyzes the conversion of uracil and 5-phospho-alpha-D-ribose 1-diphosphate (PRPP) to UMP and diphosphate. The sequence is that of Uracil phosphoribosyltransferase from Sulfolobus acidocaldarius (strain ATCC 33909 / DSM 639 / JCM 8929 / NBRC 15157 / NCIMB 11770).